The primary structure comprises 352 residues: D-alanine--D-alanine ligase (352 aa).

The ATP-grasp domain occupies 135–344 (KTVFAKAGLP…FPQLVDRLIE (210 aa)). 171–226 (EETLNYPCFVKPANLGSSVGIAKVRSRSELEKALDQAASYDRRIIVEAGVIAREVE) is a binding site for ATP. Mg(2+) contacts are provided by D297, E311, and N313.

It belongs to the D-alanine--D-alanine ligase family. It depends on Mg(2+) as a cofactor. Mn(2+) serves as cofactor.

It is found in the cytoplasm. The catalysed reaction is 2 D-alanine + ATP = D-alanyl-D-alanine + ADP + phosphate + H(+). Its pathway is cell wall biogenesis; peptidoglycan biosynthesis. In terms of biological role, cell wall formation. The chain is D-alanine--D-alanine ligase from Gloeothece citriformis (strain PCC 7424) (Cyanothece sp. (strain PCC 7424)).